We begin with the raw amino-acid sequence, 509 residues long: Photosystem II CP47 reaction center protein (509 aa).

The next 6 membrane-spanning stretches (helical) occupy residues 21–36 (AVHL…WAGS), 101–115 (IVLS…IWHW), 140–156 (GIHL…FGAF), 203–218 (IAAG…FHLT), 237–252 (VLSS…AFIT), and 457–472 (NFAL…HGSR).

It belongs to the PsbB/PsbC family. PsbB subfamily. PSII is composed of 1 copy each of membrane proteins PsbA, PsbB, PsbC, PsbD, PsbE, PsbF, PsbH, PsbI, PsbJ, PsbK, PsbL, PsbM, PsbT, PsbX, PsbY, PsbZ, Psb30/Ycf12, at least 3 peripheral proteins of the oxygen-evolving complex and a large number of cofactors. It forms dimeric complexes. The cofactor is Binds multiple chlorophylls. PSII binds additional chlorophylls, carotenoids and specific lipids..

The protein resides in the plastid. It localises to the chloroplast thylakoid membrane. In terms of biological role, one of the components of the core complex of photosystem II (PSII). It binds chlorophyll and helps catalyze the primary light-induced photochemical processes of PSII. PSII is a light-driven water:plastoquinone oxidoreductase, using light energy to abstract electrons from H(2)O, generating O(2) and a proton gradient subsequently used for ATP formation. The chain is Photosystem II CP47 reaction center protein from Porphyra purpurea (Red seaweed).